The chain runs to 308 residues: Taste receptor type 2 member 107 (308 aa).

At 1–7 the chain is on the extracellular side; that stretch reads MLNSAEG. The helical transmembrane segment at 8–28 threads the bilayer; the sequence is ILLCVVTSEAVLGVLGDTYIA. Residues 29–43 lie on the Cytoplasmic side of the membrane; it reads LFNCMDYAKNKKLSK. The chain crosses the membrane as a helical span at residues 44 to 64; sequence IGFILIGLAISRIGVVWIIIL. Over 65-87 the chain is Extracellular; that stretch reads QGYIQVFFPHMLTSGNITEYITY. Asn80 carries N-linked (GlcNAc...) asparagine glycosylation. A helical membrane pass occupies residues 88 to 108; sequence IWVFLNHLSVWFVTNLNILYF. The Cytoplasmic portion of the chain corresponds to 109-125; it reads LKIANFSNSVFLWLKRR. Residues 126-146 form a helical membrane-spanning segment; that stretch reads VNAVFIFLSGCLLTSWLLCFP. The Extracellular segment spans residues 147–180; the sequence is QMTKILQNSKMHQRNTSWVHQRKNYFLINQSVTN. N-linked (GlcNAc...) asparagine glycosylation is found at Asn161 and Asn175. A helical membrane pass occupies residues 181-201; that stretch reads LGIFFFIIVSLITCFLLIVFL. At 202–232 the chain is on the cytoplasmic side; it reads WRHVRQMHSDVSGFRDHSTKVHVKAMKFLIS. The chain crosses the membrane as a helical span at residues 233–253; sequence FMVFFILHFVGLSIEVLCFIL. Topologically, residues 254-258 are extracellular; it reads PQNKL. The chain crosses the membrane as a helical span at residues 259 to 279; that stretch reads LFITGLTATCLYPCGHSIIVI. At 280 to 308 the chain is on the cytoplasmic side; it reads LGNKQLKQASLKALQQLKCCETKGNFRVK.

Belongs to the G-protein coupled receptor T2R family.

It is found in the membrane. Functionally, putative taste receptor which may play a role in the perception of bitterness. This is Taste receptor type 2 member 107 from Mus musculus (Mouse).